The chain runs to 367 residues: Heme A synthase (367 aa).

5 helical membrane passes run 25 to 45 (AIRI…LVGG), 111 to 131 (FLAR…VLTG), 137 to 157 (LWLP…IGWW), 174 to 194 (LATH…FMRA), and 211 to 231 (LAGL…LVAG). Residue H274 coordinates heme. The next 3 helical transmembrane spans lie at 276 to 296 (LGAY…LRAA), 305 to 325 (SVVL…TLLL), and 327 to 347 (VPLH…GFAI). Residue H335 coordinates heme.

It belongs to the COX15/CtaA family. Type 2 subfamily. As to quaternary structure, interacts with CtaB. Heme b serves as cofactor.

Its subcellular location is the cell membrane. The enzyme catalyses Fe(II)-heme o + 2 A + H2O = Fe(II)-heme a + 2 AH2. It functions in the pathway porphyrin-containing compound metabolism; heme A biosynthesis; heme A from heme O: step 1/1. Catalyzes the conversion of heme O to heme A by two successive hydroxylations of the methyl group at C8. The first hydroxylation forms heme I, the second hydroxylation results in an unstable dihydroxymethyl group, which spontaneously dehydrates, resulting in the formyl group of heme A. In Rhizobium rhizogenes (strain K84 / ATCC BAA-868) (Agrobacterium radiobacter), this protein is Heme A synthase.